A 235-amino-acid chain; its full sequence is 7-cyano-7-deazaguanine synthase (235 aa).

10–20 (FSGGQDSTTCL) contacts ATP. Zn(2+) is bound by residues Cys198, Cys213, Cys216, and Cys219.

This sequence belongs to the QueC family. Zn(2+) is required as a cofactor.

It catalyses the reaction 7-carboxy-7-deazaguanine + NH4(+) + ATP = 7-cyano-7-deazaguanine + ADP + phosphate + H2O + H(+). The protein operates within purine metabolism; 7-cyano-7-deazaguanine biosynthesis. Functionally, catalyzes the ATP-dependent conversion of 7-carboxy-7-deazaguanine (CDG) to 7-cyano-7-deazaguanine (preQ(0)). The sequence is that of 7-cyano-7-deazaguanine synthase from Paracidovorax citrulli (strain AAC00-1) (Acidovorax citrulli).